Reading from the N-terminus, the 316-residue chain is tRNA uridine(34) hydroxylase (316 aa).

In terms of domain architecture, Rhodanese spans 123 to 217 (LSDDTVVIDA…YGKDPETKGE (95 aa)). Cys177 (cysteine persulfide intermediate) is an active-site residue.

It belongs to the TrhO family.

It carries out the reaction uridine(34) in tRNA + AH2 + O2 = 5-hydroxyuridine(34) in tRNA + A + H2O. Functionally, catalyzes oxygen-dependent 5-hydroxyuridine (ho5U) modification at position 34 in tRNAs. The sequence is that of tRNA uridine(34) hydroxylase from Staphylococcus saprophyticus subsp. saprophyticus (strain ATCC 15305 / DSM 20229 / NCIMB 8711 / NCTC 7292 / S-41).